Here is a 271-residue protein sequence, read N- to C-terminus: Large ribosomal subunit protein eL8 (271 aa).

The protein belongs to the eukaryotic ribosomal protein eL8 family.

The sequence is that of Large ribosomal subunit protein eL8 (RpL7A) from Drosophila melanogaster (Fruit fly).